The sequence spans 104 residues: UPF0145 protein VNG_2432C (104 aa).

The protein belongs to the UPF0145 family.

The sequence is that of UPF0145 protein VNG_2432C from Halobacterium salinarum (strain ATCC 700922 / JCM 11081 / NRC-1) (Halobacterium halobium).